The chain runs to 542 residues: Organic anion transporter 3 (542 aa).

At 1–9 the chain is on the cytoplasmic side; it reads MTFSEILDR. Phosphoserine is present on Ser4. A helical transmembrane segment spans residues 10-30; the sequence is VGSMGHFQFLHVAILGLPILN. At 31 to 123 the chain is on the extracellular side; sequence MANHNLLQIF…LVCNSNKLKE (93 aa). 2 N-linked (GlcNAc...) asparagine glycosylation sites follow: Asn86 and Asn102. A helical membrane pass occupies residues 124–144; it reads MAQSIFMAGILIGGLVLGDLS. The Cytoplasmic portion of the chain corresponds to 145–154; that stretch reads DRFGRRPILT. A helical membrane pass occupies residues 155-175; the sequence is CSYLLLAASGSGAAFSPTFPI. Tyr176 is a topological domain (extracellular). The chain crosses the membrane as a helical span at residues 177–197; it reads MVFRFLCGFGISGITLSTVIL. The Cytoplasmic segment spans residues 198-212; the sequence is NVEWVPTRMRAIMST. The helical transmembrane segment at 213-233 threads the bilayer; sequence ALGYCYTFGQFILPGLAYAIP. Residues 234–236 lie on the Extracellular side of the membrane; that stretch reads QWR. The helical transmembrane segment at 237-257 threads the bilayer; the sequence is WLQLTVSIPFFVFFLSSWWTP. The Cytoplasmic portion of the chain corresponds to 258–327; that stretch reads ESIRWLVLSG…FRIPMLRRMT (70 aa). The helical transmembrane segment at 328–348 threads the bilayer; that stretch reads FCLSLAWFATGFAYYSLAMGV. Residues 349–354 lie on the Extracellular side of the membrane; the sequence is EEFGVN. Residues 355-375 form a helical membrane-spanning segment; that stretch reads LYILQIIFGGVDVPAKFITIL. At 376–386 the chain is on the cytoplasmic side; the sequence is SLSYLGRHTTQ. The helical transmembrane segment at 387–407 threads the bilayer; that stretch reads AAALLLAGGAILALTFVPLDL. The Extracellular portion of the chain corresponds to 408 to 411; it reads QTVR. Residues 412-432 form a helical membrane-spanning segment; it reads TVLAVFGKGCLSSSFSCLFLY. Topologically, residues 433 to 471 are cytoplasmic; that stretch reads TSELYPTVIRQTGMGVSNLWTRVGSMVSPLVKITGEVQP. The helical transmembrane segment at 472–492 threads the bilayer; sequence FIPNIIYGITALLGGSAALFL. The Extracellular portion of the chain corresponds to 493 to 542; sequence PETLNQPLPETIEDLENWSLRAKKPKQEPEVEKASQRIPLQPHGPGLGSS. A disordered region spans residues 515-542; the sequence is KKPKQEPEVEKASQRIPLQPHGPGLGSS. Residues 517–527 show a composition bias toward basic and acidic residues; that stretch reads PKQEPEVEKAS.

The protein belongs to the major facilitator (TC 2.A.1) superfamily. Organic cation transporter (TC 2.A.1.19) family. In terms of tissue distribution, strongly expressed in kidney. Weaker expression in brain and skeletal muscle. Expressed in adrenal glands.

It is found in the basolateral cell membrane. It catalyses the reaction estrone 3-sulfate(out) + glutarate(in) = estrone 3-sulfate(in) + glutarate(out). The enzyme catalyses estrone 3-sulfate(in) + 2-oxoglutarate(out) = estrone 3-sulfate(out) + 2-oxoglutarate(in). The catalysed reaction is glutarate(in) + 2-oxoglutarate(out) = glutarate(out) + 2-oxoglutarate(in). It carries out the reaction urate(in) + 2-oxoglutarate(out) = urate(out) + 2-oxoglutarate(in). It catalyses the reaction taurocholate(out) + glutarate(in) = taurocholate(in) + glutarate(out). The enzyme catalyses dehydroepiandrosterone 3-sulfate(out) + glutarate(in) = dehydroepiandrosterone 3-sulfate(in) + glutarate(out). The catalysed reaction is prostaglandin F2alpha(out) + glutarate(in) = prostaglandin F2alpha(in) + glutarate(out). It carries out the reaction prostaglandin F2alpha(out) + 2-oxoglutarate(in) = prostaglandin F2alpha(in) + 2-oxoglutarate(out). It catalyses the reaction (R)-carnitine(out) + 2-oxoglutarate(in) = (R)-carnitine(in) + 2-oxoglutarate(out). The enzyme catalyses glutarate(in) + (R)-carnitine(out) = glutarate(out) + (R)-carnitine(in). The catalysed reaction is prostaglandin E2(out) + 2-oxoglutarate(in) = prostaglandin E2(in) + 2-oxoglutarate(out). It carries out the reaction prostaglandin E2(out) + glutarate(in) = prostaglandin E2(in) + glutarate(out). It catalyses the reaction urate(in) + glutarate(out) = urate(out) + glutarate(in). The enzyme catalyses taurocholate(out) + 2-oxoglutarate(in) = taurocholate(in) + 2-oxoglutarate(out). The catalysed reaction is dehydroepiandrosterone 3-sulfate(out) + 2-oxoglutarate(in) = dehydroepiandrosterone 3-sulfate(in) + 2-oxoglutarate(out). It carries out the reaction kynurenate(out) + a dicarboxylate(in) = kynurenate(in) + a dicarboxylate(out). It catalyses the reaction (indol-3-yl)acetate(out) + a dicarboxylate(in) = (indol-3-yl)acetate(in) + a dicarboxylate(out). The enzyme catalyses indoxyl sulfate(out) + a dicarboxylate(in) = indoxyl sulfate(in) + a dicarboxylate(out). The catalysed reaction is N-benzoylglycine(out) + a dicarboxylate(in) = N-benzoylglycine(in) + a dicarboxylate(out). It carries out the reaction 3-carboxy-4-methyl-5-propyl-2-furanpropanoate(out) + a dicarboxylate(in) = 3-carboxy-4-methyl-5-propyl-2-furanpropanoate(in) + a dicarboxylate(out). It catalyses the reaction (6R)-L-erythro-5,6,7,8-tetrahydrobiopterin(out) + a dicarboxylate(in) = (6R)-L-erythro-5,6,7,8-tetrahydrobiopterin(in) + a dicarboxylate(out). The enzyme catalyses L-erythro-7,8-dihydrobiopterin(out) + a dicarboxylate(in) = L-erythro-7,8-dihydrobiopterin(in) + a dicarboxylate(out). The catalysed reaction is L-sepiapterin(out) + a dicarboxylate(in) = L-sepiapterin(in) + a dicarboxylate(out). Its function is as follows. Functions as an organic anion/dicarboxylate exchanger that couples organic anion uptake indirectly to the sodium gradient. Transports organic anions such as estrone 3-sulfate (E1S) and urate in exchange for dicarboxylates such as glutarate or ketoglutarate (2-oxoglutarate). Plays an important role in the excretion of endogenous and exogenous organic anions, especially from the kidney and the brain. E1S transport is pH- and chloride-dependent and may also involve E1S/cGMP exchange. Responsible for the transport of prostaglandin E2 (PGE2) and prostaglandin F2(alpha) (PGF2(alpha)) in the basolateral side of the renal tubule. Involved in the transport of neuroactive tryptophan metabolites kynurenate and xanthurenate. Functions as a biopterin transporters involved in the uptake and the secretion of coenzymes tetrahydrobiopterin (BH4), dihydrobiopterin (BH2) and sepiapterin to urine, thereby determining baseline levels of blood biopterins. May be involved in the basolateral transport of steviol, a metabolite of the popular sugar substitute stevioside. May participate in the detoxification/ renal excretion of drugs and xenobiotics, such as the histamine H(2)-receptor antagonists fexofenadine and cimetidine, the antibiotic benzylpenicillin (PCG), the anionic herbicide 2,4-dichloro-phenoxyacetate (2,4-D), the diagnostic agent p-aminohippurate (PAH), the antiviral acyclovir (ACV), and the mycotoxin ochratoxin (OTA), by transporting these exogenous organic anions across the cell membrane in exchange for dicarboxylates such as 2-oxoglutarate. Contributes to the renal uptake of potent uremic toxins (indoxyl sulfate (IS), indole acetate (IA), hippurate/N-benzoylglycine (HA) and 3-carboxy-4-methyl-5-propyl-2-furanpropionate (CMPF)), pravastatin, PCG, E1S and dehydroepiandrosterone sulfate (DHEAS), and is partly involved in the renal uptake of temocaprilat (an angiotensin-converting enzyme (ACE) inhibitor). May contribute to the release of cortisol in the adrenals. Involved in one of the detoxification systems on the choroid plexus (CP), removes substrates such as E1S or taurocholate (TC), PCG, 2,4-D and PAH, from the cerebrospinal fluid (CSF) to the blood for eventual excretion in urine and bile. Also contributes to the uptake of several other organic compounds such as the prostanoids prostaglandin E(2) and prostaglandin F(2-alpha), L-carnitine, and the therapeutic drugs allopurinol, 6-mercaptopurine (6-MP) and 5-fluorouracil (5-FU). Mediates the transport of PAH, PCG, and the statins pravastatin and pitavastatin, from the cerebrum into the blood circulation across the blood-brain barrier (BBB). In summary, plays a role in the efflux of drugs and xenobiotics, helping reduce their undesired toxicological effects on the body. The sequence is that of Organic anion transporter 3 from Homo sapiens (Human).